Here is a 165-residue protein sequence, read N- to C-terminus: MSRIALYPGSFDPVTNGHLDVVRHAVELCDRLVVAIGIHPGKKPLFTTEERLVMVRRVFEPVAEAAGCAFDCTTYDNLTVTAAQQVGASLMIRGLRDGTDLDYEMQIAGMNETMAPGVHTVFLPASVGVRPITATLVRQIAAMGGDVSAFVPPDVAASLKSKFAG.

Residue Ser10 participates in substrate binding. ATP contacts are provided by residues Ser10 to Phe11 and His18. Substrate is bound by residues Lys42, Thr79, and Arg93. ATP contacts are provided by residues Gly94 to Arg96, Glu104, and Val129 to Thr135.

It belongs to the bacterial CoaD family. In terms of assembly, homohexamer. The cofactor is Mg(2+).

Its subcellular location is the cytoplasm. The enzyme catalyses (R)-4'-phosphopantetheine + ATP + H(+) = 3'-dephospho-CoA + diphosphate. Its pathway is cofactor biosynthesis; coenzyme A biosynthesis; CoA from (R)-pantothenate: step 4/5. Functionally, reversibly transfers an adenylyl group from ATP to 4'-phosphopantetheine, yielding dephospho-CoA (dPCoA) and pyrophosphate. The protein is Phosphopantetheine adenylyltransferase of Rhodopseudomonas palustris (strain HaA2).